Reading from the N-terminus, the 295-residue chain is Trehalose/maltose transport system permease protein MalF (295 aa).

Transmembrane regions (helical) follow at residues 16–36 (LGYLMILPLLTVVLVFIILPV), 79–99 (VSFSFVSVSLETILGLSFALI), 112–132 (AIVLIPWAVPTIISARTWELM), 146–166 (ILGVSPVNWLGTPISAFFAIV), 210–230 (ITLPLLKPVLIVALILRTIDA), 236–256 (IIYVLTGGGPGGATTSISLLA), and 267–287 (IGSAISILTFVLVLSFTIVYL). One can recognise an ABC transmembrane type-1 domain in the interval 75–286 (TFVTVSFSFV…VLVLSFTIVY (212 aa)).

This sequence belongs to the binding-protein-dependent transport system permease family. The complex is composed of two ATP-binding proteins (MalK), two transmembrane proteins (MalG and MalF) and a solute-binding protein (MalE).

It is found in the cell membrane. Functionally, part of the ABC transporter complex MalEFGK involved in trehalose/maltose import. Responsible for the translocation of the substrate across the membrane. This chain is Trehalose/maltose transport system permease protein MalF (malF), found in Thermococcus litoralis (strain ATCC 51850 / DSM 5473 / JCM 8560 / NS-C).